The sequence spans 269 residues: uncharacterized protein (269 aa).

103 to 110 (GIFTMGKS) is an ATP binding site.

This is an uncharacterized protein from Mycoplasma pneumoniae (strain ATCC 29342 / M129 / Subtype 1) (Mycoplasmoides pneumoniae).